We begin with the raw amino-acid sequence, 475 residues long: Legumain (475 aa).

An N-terminal signal peptide occupies residues 1-15; that stretch reads MVMMLVMLSLHGTAA. Residues 16 to 35 constitute a propeptide that is removed on maturation; sequence RLNRREWDSVIQLPTEPVDD. His158 is a catalytic residue. Residue Cys200 is the Nucleophile of the active site. Residues Cys233 and Cys247 are joined by a disulfide bond. N-linked (GlcNAc...) asparagine glycosylation occurs at Asn300. Cystine bridges form between Cys411-Cys441 and Cys423-Cys458.

The protein belongs to the peptidase C13 family. In terms of assembly, homodimer.

It carries out the reaction Hydrolysis of proteins and small molecule substrates at -Asn-|-Xaa- bonds.. Repressed by various protease inhibitors including p-chloromercuribenzene sulfonic acid (PCMBS), N-ethylmaleimide, kininogen, elastatinal, cystatin EW and leupeptin. Asparaginyl endopeptidase able to cleave almost all peptide bonds on the carboxyl side of Asn residues, except at the NH2 terminus or second position or with N-glycosylated Asn. Responsible for the maturation (circular permutation) of concanavalin A from its precursor, by performing both cleavage and cleavage-coupled transpeptidation to form conA. This chain is Legumain, found in Canavalia ensiformis (Jack bean).